We begin with the raw amino-acid sequence, 664 residues long: Macoilin (664 aa).

Helical transmembrane passes span 28–48 (TFLY…DFVV), 75–95 (AFSV…LLFI), 120–140 (VCLP…AIRF), and 154–174 (FAAH…KSYV). Positions 253 to 265 (REKGKEKDKDAKK) are enriched in basic and acidic residues. Residues 253–274 (REKGKEKDKDAKKHNLGINNNN) form a disordered region. At Ser305 the chain carries Phosphoserine. Residues 320–348 (KNYKNASGVVNSSPRSHSATNGSIPSSSS) show a composition bias toward polar residues. Positions 320 to 375 (KNYKNASGVVNSSPRSHSATNGSIPSSSSKNEKKQKCTSKSPSTHKDLMENCIPNN) are disordered. A glycan (N-linked (GlcNAc...) asparagine) is linked at Asn324. At Ser332 the chain carries Phosphoserine. N-linked (GlcNAc...) asparagine glycans are attached at residues Asn340 and Asn452. A disordered region spans residues 630–664 (TSPLSPVSPHYSSKFVETSPSGLDPNASVYQPLKK). Phosphoserine is present on residues Ser631 and Ser634. The N-linked (GlcNAc...) asparagine glycan is linked to Asn655.

It belongs to the macoilin family.

It localises to the rough endoplasmic reticulum membrane. The protein localises to the nucleus membrane. Plays a role in the regulation of neuronal activity. This Pan troglodytes (Chimpanzee) protein is Macoilin (MACO1).